Reading from the N-terminus, the 488-residue chain is TOX high mobility group box family member 2 (488 aa).

A required for transcriptional activation region spans residues 76 to 114 (YEIPPITPPNLPEPSLLHLGDHEASYHSLCHGLTPNGLL). 3 disordered regions span residues 192–258 (RSSI…PQKP), 293–328 (WDSL…KQPM), and 363–473 (SLLP…ECGI). Over residues 204–216 (GSKSATPSPSSST) the composition is skewed to low complexity. Residues 222 to 239 (EVHFKISGEKRPSADPGK) show a composition bias toward basic and acidic residues. The Nuclear localization signal signature appears at 223-252 (VHFKISGEKRPSADPGKKAKNPKKKKKKDP). Basic residues predominate over residues 240–250 (KAKNPKKKKKK). The HMG box DNA-binding region spans 255-323 (PQKPVSAYAL…QANPPAKMLP (69 aa)). Positions 302–316 (QSSPDQGETKSTQAN) are enriched in polar residues. Residues 443-460 (PSSSGSCSPGPSNPTSSG) show a composition bias toward low complexity.

It is found in the nucleus. Putative transcriptional activator involved in the hypothalamo-pituitary-gonadal system. This chain is TOX high mobility group box family member 2 (TOX2), found in Homo sapiens (Human).